The chain runs to 1347 residues: Serine-aspartate repeat-containing protein D (1347 aa).

The N-terminal stretch at 1 to 35 (MLNRENKTAITRKGMVSNRLNKFSIRKYTVGTASI) is a signal peptide. A YSIRK-G/S signaling motif motif is present at residues 23–34 (FSIRKYTVGTAS). The ligand binding A region stretch occupies residues 36–568 (LVGTTLIFGL…NNQSGGAGQE (533 aa)). The interval 55–185 (STNKELNEAT…NKKVDAKTES (131 aa)) is disordered. Composition is skewed to polar residues over residues 62–71 (EATTSASDNQ) and 94–109 (EMVS…NGNK). Positions 130–145 (KSDEQASPKSTNEDLN) are enriched in basic and acidic residues. 2 stretches are compositionally biased toward polar residues: residues 146-155 (TKQTISNQEA) and 163-173 (NKSVVNAQPTN). The span at 174 to 183 (EENKKVDAKT) shows a compositional bias: basic and acidic residues. 5 consecutive CNA-B domains span residues 569-680 (VYKI…IYKP), 681-791 (KYNL…YKTP), 792-901 (KYNL…FYKP), 902-1012 (TYNL…YKTS), and 1013-1123 (KYSL…EEDT). Disordered regions lie at residues 857-883 (ETPS…TSTT), 972-992 (YTPT…GLTT), and 1078-1323 (EKPA…SNNA). Composition is skewed to polar residues over residues 860-869 (SGYTPTQVGS) and 972-981 (YTPTSVTSGN). Composition is skewed to acidic residues over residues 1091 to 1101 (TEDDKDADGGE) and 1118 to 1286 (YFEE…DSDS). The short motif at 1310–1314 (LPETG) is the LPXTG sorting signal element. Residue Thr1313 is modified to Pentaglycyl murein peptidoglycan amidated threonine. The propeptide at 1314 to 1347 (GNENSGSNNATLFGGLFAALGSLLLFGRRKKQNK) is removed by sortase.

Belongs to the serine-aspartate repeat-containing protein (SDr) family. Interacts with host DSG1; this interaction increases S.aureus adherence to keratinocytes.

The protein localises to the secreted. It is found in the cell wall. In terms of biological role, cell surface-associated calcium-binding protein which plays an important role in adhesion and pathogenesis. Mediates interactions with components of the extracellular matrix such as host DSG1 to promote bacterial adhesion to host cells. Contributes to the resistance to killing by innate immune components such as neutrophils present in blood and thus attenuates bacterial clearance. This Staphylococcus aureus (strain MW2) protein is Serine-aspartate repeat-containing protein D (sdrD).